The chain runs to 373 residues: Queuine tRNA-ribosyltransferase (373 aa).

The active-site Proton acceptor is the Asp91. Substrate contacts are provided by residues 91–95 (DSGGF), Asp145, Gln187, and Gly214. An RNA binding region spans residues 245–251 (GVGKPED). Asp264 serves as the catalytic Nucleophile. The tract at residues 269-273 (TRNAR) is RNA binding; important for wobble base 34 recognition. Zn(2+) is bound by residues Cys302, Cys304, Cys307, and His333.

It belongs to the queuine tRNA-ribosyltransferase family. In terms of assembly, homodimer. Within each dimer, one monomer is responsible for RNA recognition and catalysis, while the other monomer binds to the replacement base PreQ1. Zn(2+) is required as a cofactor.

The enzyme catalyses 7-aminomethyl-7-carbaguanine + guanosine(34) in tRNA = 7-aminomethyl-7-carbaguanosine(34) in tRNA + guanine. The protein operates within tRNA modification; tRNA-queuosine biosynthesis. Catalyzes the base-exchange of a guanine (G) residue with the queuine precursor 7-aminomethyl-7-deazaguanine (PreQ1) at position 34 (anticodon wobble position) in tRNAs with GU(N) anticodons (tRNA-Asp, -Asn, -His and -Tyr). Catalysis occurs through a double-displacement mechanism. The nucleophile active site attacks the C1' of nucleotide 34 to detach the guanine base from the RNA, forming a covalent enzyme-RNA intermediate. The proton acceptor active site deprotonates the incoming PreQ1, allowing a nucleophilic attack on the C1' of the ribose to form the product. After dissociation, two additional enzymatic reactions on the tRNA convert PreQ1 to queuine (Q), resulting in the hypermodified nucleoside queuosine (7-(((4,5-cis-dihydroxy-2-cyclopenten-1-yl)amino)methyl)-7-deazaguanosine). This is Queuine tRNA-ribosyltransferase from Idiomarina loihiensis (strain ATCC BAA-735 / DSM 15497 / L2-TR).